The sequence spans 298 residues: MATTSRSSLKRYYDVNGWLFVAPAIALISVFMLYPILRSLVLSLYTGRGMMLKFSGTGNLVRLWNDPVFWQALQNTVIFFVVQVPIMITMALILAAMLNNPKLRYSGLFRTMIFLPCVSSLVAYSILFKSMFSLDGVVNNTLLAIGIIGEPIGWLTDPFWAKVLIIIAITWRWTGYNMIFYLAALQNIDRSIYEAAKIDGVPSWGRFAFLTIPMLKPVILFTTITSTIGTLQLFDEVYNFTEGTGGPANSTLTLSLYIYNLTFRFMPSFSYAATVSYVIVLMVAVLSFLQFYAARERK.

6 helical membrane-spanning segments follow: residues 17-37 (GWLFVAPAIALISVFMLYPIL), 77-97 (VIFFVVQVPIMITMALILAAM), 112-132 (MIFLPCVSSLVAYSILFKSMF), 151-171 (PIGWLTDPFWAKVLIIIAITW), 208-228 (AFLTIPMLKPVILFTTITSTI), and 269-289 (FSYAATVSYVIVLMVAVLSFL). The ABC transmembrane type-1 domain occupies 73 to 290 (LQNTVIFFVV…LMVAVLSFLQ (218 aa)).

It belongs to the binding-protein-dependent transport system permease family. MalFG subfamily.

Its subcellular location is the cell inner membrane. Functionally, part of the binding-protein-dependent transport system for lactose. Probably responsible for the translocation of the substrate across the membrane. This is Lactose transport system permease protein LacF (lacF) from Rhizobium radiobacter (Agrobacterium tumefaciens).